A 355-amino-acid chain; its full sequence is Serine acetyltransferase 4 (355 aa).

This sequence belongs to the transferase hexapeptide repeat family. As to quaternary structure, homomultimer. Localized in vascular tissues, particularly in phloem.

It is found in the cytoplasm. The enzyme catalyses L-serine + acetyl-CoA = O-acetyl-L-serine + CoA. It participates in amino-acid biosynthesis; L-cysteine biosynthesis; L-cysteine from L-serine: step 1/2. With respect to regulation, feedback inhibitions by L-Ser and acetyl-CoA. This Arabidopsis thaliana (Mouse-ear cress) protein is Serine acetyltransferase 4.